We begin with the raw amino-acid sequence, 67 residues long: UPF0337 protein BCE_3655 (67 aa).

It belongs to the UPF0337 (CsbD) family.

The protein is UPF0337 protein BCE_3655 of Bacillus cereus (strain ATCC 10987 / NRS 248).